Consider the following 172-residue polypeptide: Large ribosomal subunit protein uL10 (172 aa).

It belongs to the universal ribosomal protein uL10 family. Part of the ribosomal stalk of the 50S ribosomal subunit. The N-terminus interacts with L11 and the large rRNA to form the base of the stalk. The C-terminus forms an elongated spine to which L12 dimers bind in a sequential fashion forming a multimeric L10(L12)X complex.

In terms of biological role, forms part of the ribosomal stalk, playing a central role in the interaction of the ribosome with GTP-bound translation factors. This chain is Large ribosomal subunit protein uL10, found in Rhodopseudomonas palustris (strain BisA53).